The primary structure comprises 345 residues: Heat stress transcription factor A-4c (345 aa).

Residues 11-105 mediate DNA binding; the sequence is LPPFLTKTYE…LMKNIHRRKP (95 aa). Residues 119–185 are hydrophobic repeat HR-A/B; sequence PLTESERRSM…SIVAYVSQVL (67 aa). The Nuclear localization signal signature appears at 199-203; sequence RRKRR. An AHA1 motif is present at residues 226–235; the sequence is LTFWENLVSE. The segment at 240–329 is disordered; that stretch reads SGLQSSSMDH…NGNKIGNQRT (90 aa). Over residues 274–283 the composition is skewed to low complexity; the sequence is PPVTVTAPAP. Positions 289–298 match the AHA2 motif; the sequence is DDFWEQCLTE. Composition is skewed to polar residues over residues 296-308 and 317-329; these read LTEN…QQEV and NDNN…NQRT.

It belongs to the HSF family. Class A subfamily. In terms of assembly, homotrimer. In terms of processing, exhibits temperature-dependent phosphorylation. As to expression, expressed in roots, seedlings and at lower levels in leaves.

It localises to the nucleus. Transcriptional activator that specifically binds DNA sequence 5'-AGAAnnTTCT-3' known as heat shock promoter elements (HSE). May be involved in general response to auxin. This Arabidopsis thaliana (Mouse-ear cress) protein is Heat stress transcription factor A-4c (HSFA4C).